Reading from the N-terminus, the 228-residue chain is Homeobox-leucine zipper protein ATHB-53 (228 aa).

The disordered stretch occupies residues 36–62; it reads DGGEESKPVKRRRKRRSKGSSATNEED. A compositionally biased stretch (basic residues) spans 44-53; sequence VKRRRKRRSK. Residues 68-127 constitute a DNA-binding region (homeobox); the sequence is GMLRKRKLTDEQVNMLEYSFGNEHKLESGRKEKIAGELGLDPRQVAVWFQNRRARWKNKK. The tract at residues 128–156 is leucine-zipper; that stretch reads LEEEYAKLKNHHDNVVLGQCQLESQILKL.

It belongs to the HD-ZIP homeobox family. Class I subfamily. As to expression, expressed in root meristem, late flowers and siliques.

It is found in the nucleus. Functionally, probable transcription factor that may play a regulatory role in auxin/cytokinin signaling during root development. The sequence is that of Homeobox-leucine zipper protein ATHB-53 (ATHB-53) from Arabidopsis thaliana (Mouse-ear cress).